The chain runs to 151 residues: MKKIDVKILDSRIGNEFPLPTYATEGSAGLDLRALIDESFEIQPGETKLIPTGLSIYIADPNLAAVILPRSGLGHKHGIVLGNLVGLIDSDYQGPLMVSMWNRGNEPFKIEVGDRIAQLVFVPVVQAEFNIVEDFQQTERGEGGFGHSGKQ.

Residues 70–72 (RSG), N83, 87–89 (LID), and M97 each bind substrate.

This sequence belongs to the dUTPase family. Mg(2+) is required as a cofactor.

It catalyses the reaction dUTP + H2O = dUMP + diphosphate + H(+). It participates in pyrimidine metabolism; dUMP biosynthesis; dUMP from dCTP (dUTP route): step 2/2. This enzyme is involved in nucleotide metabolism: it produces dUMP, the immediate precursor of thymidine nucleotides and it decreases the intracellular concentration of dUTP so that uracil cannot be incorporated into DNA. This chain is Deoxyuridine 5'-triphosphate nucleotidohydrolase, found in Haemophilus influenzae (strain 86-028NP).